The chain runs to 489 residues: Ribonuclease G (489 aa).

In terms of domain architecture, S1 motif spans 39–128 (GNIYKGRVSR…LTTDITLPSR (90 aa)). Asp304 and Asp347 together coordinate Mg(2+).

This sequence belongs to the RNase E/G family. RNase G subfamily. In terms of assembly, homodimer, and possible higher multimers. The cofactor is Mg(2+).

The protein localises to the cytoplasm. In terms of biological role, acts in the processing of the 5'-end of precursors of 16S rRNA. Confers adaptive resistance to aminoglycoside antibiotics through modulation of 16S rRNA processing. An endoribonuclease, it prefers 5'-monophosphorylated substrates and cleaves single-stranded sites rich in A and U residues; also contributes to 23S rRNA processing, tRNA processing and mRNA turnover. Involved in decay of speF mRNA, has a preference for adenine nucleotides. The protein is Ribonuclease G of Salmonella typhimurium (strain SL1344).